The chain runs to 490 residues: Argininosuccinate lyase (490 aa).

This sequence belongs to the lyase 1 family. Argininosuccinate lyase subfamily.

It localises to the cytoplasm. It catalyses the reaction 2-(N(omega)-L-arginino)succinate = fumarate + L-arginine. It functions in the pathway amino-acid biosynthesis; L-arginine biosynthesis; L-arginine from L-ornithine and carbamoyl phosphate: step 3/3. The protein is Argininosuccinate lyase of Bifidobacterium longum subsp. infantis (strain ATCC 15697 / DSM 20088 / JCM 1222 / NCTC 11817 / S12).